A 79-amino-acid chain; its full sequence is Conotoxin Tr6.2 (79 aa).

The signal sequence occupies residues 1–22 (MKLTCVLIISVLFLTASQLITA). A propeptide spanning residues 23 to 47 (VYSRDKQQYRAARLRDEMRNLKGAR) is cleaved from the precursor. 3 disulfide bridges follow: cysteine 49–cysteine 62, cysteine 56–cysteine 67, and cysteine 61–cysteine 77. 4-hydroxyproline is present on residues proline 60 and proline 63.

This sequence belongs to the conotoxin O1 superfamily. In terms of tissue distribution, expressed by the venom duct.

It is found in the secreted. Functionally, ion channel inhibitor that inhibits the increase in intracellular calcium upon depolarization in DRG neurons. In vivo, both intraperitoneal and intracranial injections into mice induce hyperactivity. This is Conotoxin Tr6.2 from Conus terebra (Sea snail).